The following is a 274-amino-acid chain: 2,3,4,5-tetrahydropyridine-2,6-dicarboxylate N-succinyltransferase (274 aa).

Substrate-binding residues include arginine 104 and aspartate 141.

This sequence belongs to the transferase hexapeptide repeat family. As to quaternary structure, homotrimer.

It localises to the cytoplasm. It carries out the reaction (S)-2,3,4,5-tetrahydrodipicolinate + succinyl-CoA + H2O = (S)-2-succinylamino-6-oxoheptanedioate + CoA. It participates in amino-acid biosynthesis; L-lysine biosynthesis via DAP pathway; LL-2,6-diaminopimelate from (S)-tetrahydrodipicolinate (succinylase route): step 1/3. The polypeptide is 2,3,4,5-tetrahydropyridine-2,6-dicarboxylate N-succinyltransferase (Shewanella frigidimarina (strain NCIMB 400)).